A 602-amino-acid polypeptide reads, in one-letter code: MEVFTFEKSYLERLKEAEAVLSWEGAVMPASQVRSEWKSYVELKIEPAGWQAIWKIPRVICEDLKLRYPTIVYGYVEQVIFDELKAVFVVTAVQDSDVHLPESNEVSLVELWPTVQQENAALNVDTTAECIDRLRFFYTHVWMPWDKDYDDDRDWVQQHLQARIQLVCDLSKNRLPRPLALHMRTLLAEAKYIQQRLDYLELDLSDAESDDEAVELNDSVAEPARKQSKAGSANGCLNVSSLPVTDLMCLHLRMAIIRSEFEILENPEMRRAYSELQSNSLKRLRCSSGRTRQSEDLLVERNSISHVVTLPGKLQQQLELLKLAQTLVKPESKVQLSNTLQDVLSICQSNDDILLSPGEHTIKFLEHLNDNGSLRGLTQPEAILSPAADLSLLPVVCSSDEDSTLLVIDGDYTLSELVLDCRHVRRGILLRNGTLTMRGCRLLGDGSSSTQEGIVCMPGASVELKSCLIENFAVGVSMRPKSSAELGSVQFKTCKTGLELLEKSASVNLQGSKCSFENCALGILADGFVLGEQRTEKVLVLNKFSELQRYNEDNLLGNCSFYNCKKNVRVFNESGQLLAQRSHQQLLEDELGGENKENIQLV.

A coiled-coil region spans residues 188-208 (AEAKYIQQRLDYLELDLSDAE).

As to quaternary structure, interacts (via N-terminus) with both members of the centralspindlin complex, Pav and Tum. As to expression, detected in testis (at protein level). Also expressed in ovary.

It is found in the midbody. In terms of biological role, required during male meiosis for completion of spermatocyte cytokinesis and possibly also required in female germline cells. Also involved in ring canal formation in male and female germline cells. Not essential for cleavage furrow ingression but is required for contractile ring stability and the attachment of the furrowing membrane to the actomyosin ring in late telophase. Displays high binding affinity for beta-galactosides. This chain is Protein nessun dorma, found in Drosophila melanogaster (Fruit fly).